The chain runs to 947 residues: Nonribosomal peptide synthetase ucdA (947 aa).

Residues Tyr25–Phe413 are adenylation (A) domain. The Carrier domain maps to Ala585–Gln665. At Ser623 the chain carries O-(pantetheine 4'-phosphoryl)serine. Residues Pro684–Phe934 are thioesterase (TE) domain.

The protein belongs to the NRP synthetase family.

It catalyses the reaction 2 3-(4-hydroxyphenyl)pyruvate + 2 ATP = atromentin + 2 AMP + 2 diphosphate + H(+). It functions in the pathway secondary metabolite biosynthesis. In terms of biological role, nonribosomal peptide synthetase that mediates the biosynthesis of usterphenyllins and uscandidusins, p-terphenyl derivatives. Within the pathway, ucdA condenses two 4-hydroxyphenylpyruvate (HPPA) units to produce atromentin. UcdA first activates HPPA through its A domain to AMP-HPPA. The HPPA unit is then loaded to the T domain and eventually transferred to the TE domain. Another HPPA unit is then loaded onto the T domain. The TE domain then catalyzes the condensation of the two HPPA units and the release of atromentin via cyclization. The pathway begin with the biosynthesis of 4-hydroxyphenylpyruvate (HPPA) from L-tyrosine, possibly by the aminotransferase ucdG. The nonribosomal peptide synthetase ucdA then condenses two HPPA units to produce atromentin. The key step in this pathway is the reduction and dehydration of atromentin to form a terphenyl triol intermediate, performed by the NAD-dependent dehydrogenase ucdB. Further O-methylation by the methyltransferase ucdC forms terphenyllin carrying two methoxy moieties at C-9 and C-12, and subsequent dihydroxylation at C-3 of ring A and C-15 of ring C by the flavin-dependent oxygenase ucdD leads to 3,15-dihydroxyterphenyllin. Prenylation by ucdE at position C-5 of ring A forms usterphenyllin B, and is followed by a second prenylation at position C-14 of ring C to form usterphenyllin A. The following furan ring formation that leads to uscandidusins A and B was proven to be an unexpected spontaneous non-enzymatic reaction. The sequence is that of Nonribosomal peptide synthetase ucdA from Aspergillus ustus.